We begin with the raw amino-acid sequence, 279 residues long: Formamidopyrimidine-DNA glycosylase (279 aa).

The Schiff-base intermediate with DNA role is filled by P2. E3 functions as the Proton donor in the catalytic mechanism. K58 functions as the Proton donor; for beta-elimination activity in the catalytic mechanism. Positions 92, 111, and 153 each coordinate DNA. The FPG-type zinc finger occupies 238–272; the sequence is TVYGKEGQSCLSCSSTIIKTKHSGRSTFYCKTCQY. R262 (proton donor; for delta-elimination activity) is an active-site residue.

The protein belongs to the FPG family. In terms of assembly, monomer. The cofactor is Zn(2+).

The enzyme catalyses Hydrolysis of DNA containing ring-opened 7-methylguanine residues, releasing 2,6-diamino-4-hydroxy-5-(N-methyl)formamidopyrimidine.. The catalysed reaction is 2'-deoxyribonucleotide-(2'-deoxyribose 5'-phosphate)-2'-deoxyribonucleotide-DNA = a 3'-end 2'-deoxyribonucleotide-(2,3-dehydro-2,3-deoxyribose 5'-phosphate)-DNA + a 5'-end 5'-phospho-2'-deoxyribonucleoside-DNA + H(+). In terms of biological role, involved in base excision repair of DNA damaged by oxidation or by mutagenic agents. Acts as a DNA glycosylase that recognizes and removes damaged bases. Has a preference for oxidized purines, such as 7,8-dihydro-8-oxoguanine (8-oxoG). Has AP (apurinic/apyrimidinic) lyase activity and introduces nicks in the DNA strand. Cleaves the DNA backbone by beta-delta elimination to generate a single-strand break at the site of the removed base with both 3'- and 5'-phosphates. This chain is Formamidopyrimidine-DNA glycosylase, found in Rickettsia massiliae (strain Mtu5).